The following is a 105-amino-acid chain: Malonate decarboxylase acyl carrier protein (105 aa).

S28 bears the O-(phosphoribosyl dephospho-coenzyme A)serine mark.

It belongs to the MdcC family. Covalently binds the prosthetic group of malonate decarboxylase.

Its subcellular location is the cytoplasm. Functionally, subunit of malonate decarboxylase, it is an acyl carrier protein to which acetyl and malonyl thioester residues are bound via a 2'-(5''-phosphoribosyl)-3'-dephospho-CoA prosthetic group and turn over during the catalytic mechanism. The sequence is that of Malonate decarboxylase acyl carrier protein from Xanthomonas campestris pv. campestris (strain 8004).